The primary structure comprises 125 residues: MADLAKIEEQLSSLTLMQAAELVKILEAKWGVSAVTPIAVASAGVADPVAEAVAEKTEFEVVLTATGDKKVEVIKIIKDITGLGLIEAKKLVDEAPKPIKSNLKKAEAEEIKNKLEATGAKVELK.

This sequence belongs to the bacterial ribosomal protein bL12 family. Homodimer. Part of the ribosomal stalk of the 50S ribosomal subunit. Forms a multimeric L10(L12)X complex, where L10 forms an elongated spine to which 2 to 4 L12 dimers bind in a sequential fashion. Binds GTP-bound translation factors.

Forms part of the ribosomal stalk which helps the ribosome interact with GTP-bound translation factors. Is thus essential for accurate translation. The sequence is that of Large ribosomal subunit protein bL12 from Rickettsia typhi (strain ATCC VR-144 / Wilmington).